The sequence spans 30 residues: Photosystem I reaction center subunit XII (30 aa).

The helical transmembrane segment at 7–26 (IFVALLFALVSAVLAIRLGK) threads the bilayer.

The protein belongs to the PsaM family.

It localises to the plastid. It is found in the chloroplast thylakoid membrane. This chain is Photosystem I reaction center subunit XII, found in Porphyra purpurea (Red seaweed).